The primary structure comprises 126 residues: Anti-adapter protein IraD (126 aa).

This sequence belongs to the GpW/Gp25 family. IraD subfamily. As to quaternary structure, interacts with RssB.

The protein resides in the cytoplasm. Inhibits RpoS proteolysis by regulating RssB activity, thereby increasing the stability of the sigma stress factor RpoS during oxidative stress. Its effect on RpoS stability is due to its interaction with RssB, which probably blocks the interaction of RssB with RpoS, and the consequent delivery of the RssB-RpoS complex to the ClpXP protein degradation pathway. The polypeptide is Anti-adapter protein IraD (Salmonella paratyphi A (strain ATCC 9150 / SARB42)).